Consider the following 167-residue polypeptide: Small ribosomal subunit protein uS5 (167 aa).

The 64-residue stretch at 12 to 75 (LQEKLITVNR…EQARRNMITI (64 aa)) folds into the S5 DRBM domain.

Belongs to the universal ribosomal protein uS5 family. As to quaternary structure, part of the 30S ribosomal subunit. Contacts proteins S4 and S8.

In terms of biological role, with S4 and S12 plays an important role in translational accuracy. Its function is as follows. Located at the back of the 30S subunit body where it stabilizes the conformation of the head with respect to the body. The chain is Small ribosomal subunit protein uS5 from Buchnera aphidicola subsp. Acyrthosiphon pisum (strain APS) (Acyrthosiphon pisum symbiotic bacterium).